Consider the following 121-residue polypeptide: UPF0738 protein BLi01253/BL05110 (121 aa).

This sequence belongs to the UPF0738 family.

This chain is UPF0738 protein BLi01253/BL05110, found in Bacillus licheniformis (strain ATCC 14580 / DSM 13 / JCM 2505 / CCUG 7422 / NBRC 12200 / NCIMB 9375 / NCTC 10341 / NRRL NRS-1264 / Gibson 46).